A 140-amino-acid chain; its full sequence is PDZ domain-containing protein 11 (140 aa).

A PDZ domain is found at 47-129 (TITLKKPPGA…ISMRVRFFPY (83 aa)).

Interacts with ATP2B1, ATP2B2, ATP2B3, ATP2B4 and ATP7A. Interacts with PLEKHA7 (via WW domains) at zonula adherens; this interaction is essential for the interaction between PLEKHA7 and the ADAM10-binding protein TSPAN33. Interacts with SLC5A6. Widely expressed (at protein level).

It localises to the secreted. The protein resides in the cytoplasm. Its subcellular location is the cell junction. The protein localises to the adherens junction. It is found in the cell membrane. Its function is as follows. Mediates docking of ADAM10 to zonula adherens by interacting with PLEKHA7 which is required for PLEKHA7 to interact with the ADAM10-binding protein TSPAN33. The polypeptide is PDZ domain-containing protein 11 (PDZD11) (Homo sapiens (Human)).